Reading from the N-terminus, the 89-residue chain is Small ribosomal subunit protein uS14 (89 aa).

Belongs to the universal ribosomal protein uS14 family. Part of the 30S ribosomal subunit. Contacts proteins S3 and S10.

Functionally, binds 16S rRNA, required for the assembly of 30S particles and may also be responsible for determining the conformation of the 16S rRNA at the A site. This Porphyromonas gingivalis (strain ATCC 33277 / DSM 20709 / CIP 103683 / JCM 12257 / NCTC 11834 / 2561) protein is Small ribosomal subunit protein uS14.